The chain runs to 423 residues: MTDKLIIRGGKKLAGTLQVDGAKNSAVALIPAAILAESEVVLEGLPDISDVHTLYNILEELGGTVRYDNKTAVIDPTDMISMPLPSGNVKKLRASYYLMGAMLGRFKKAVIGLPGGCYLGPRPIDQHIKGFEALGAKVTNEQGAIYLRADELKGARIYLDVVSVGATINIMLAAVRAKGKTVIENAAKEPEIIDVATLLTNMGAIIKGAGTDTIRITGVEHLHGCHHTIIPDRIEAGTFMVLAAASGKGVRIENVIPTHLEGIIAKLTEMGVPMDIEEDAIFVGEVEKIKKVDIKTYAYPGFPTDLQQPLTALLTRAEGSSVITDTIYPSRFKHIAEIERMGGKFKLEGRSAVINGPVQLQGSKVTATDLRAGAALVIAALLADGETEIHGVEHIERGYSKIIEKLSAIGANITRSSAAETKL.

Lys-23–Asn-24 lines the phosphoenolpyruvate pocket. Position 93 (Arg-93) interacts with UDP-N-acetyl-alpha-D-glucosamine. Cys-117 (proton donor) is an active-site residue. Cys-117 is subject to 2-(S-cysteinyl)pyruvic acid O-phosphothioketal. UDP-N-acetyl-alpha-D-glucosamine-binding positions include Arg-122–Gln-126, Asp-305, and Ile-327.

This sequence belongs to the EPSP synthase family. MurA subfamily.

It localises to the cytoplasm. The enzyme catalyses phosphoenolpyruvate + UDP-N-acetyl-alpha-D-glucosamine = UDP-N-acetyl-3-O-(1-carboxyvinyl)-alpha-D-glucosamine + phosphate. It participates in cell wall biogenesis; peptidoglycan biosynthesis. Cell wall formation. Adds enolpyruvyl to UDP-N-acetylglucosamine. This chain is UDP-N-acetylglucosamine 1-carboxyvinyltransferase 2, found in Listeria monocytogenes serotype 4b (strain F2365).